A 795-amino-acid polypeptide reads, in one-letter code: Volume-regulated anion channel subunit LRRC8E (795 aa).

Topologically, residues 1–22 are cytoplasmic; sequence MIPVAEFKQFTEQQPAFKVLKP. A helical transmembrane segment spans residues 23–43; it reads WWDVLAEYLTVAMLMIGVFGC. The Extracellular portion of the chain corresponds to 44-116; that stretch reads TLQVTQDKII…YETALHWYAK (73 aa). An intrachain disulfide couples cysteine 54 to cysteine 300. Asparagine 63 is a glycosylation site (N-linked (GlcNAc...) asparagine). Residues 117–137 form a helical membrane-spanning segment; the sequence is YFPYLVVIHTLIFMVCTSFWF. Over 138–264 the chain is Cytoplasmic; that stretch reads KFPGTSSKIE…IRQTVLKVCK (127 aa). The helical transmembrane segment at 265 to 285 threads the bilayer; the sequence is FFAILVYNLIYVEKISFLVAC. Over 286-312 the chain is Extracellular; sequence RVETSEITGYASFCCNHTKAHLFSKLA. N-linked (GlcNAc...) asparagine glycosylation is present at asparagine 301. A helical membrane pass occupies residues 313–333; sequence FCYISFVCVYGITCLYTLYWL. Topologically, residues 334 to 795 are cytoplasmic; that stretch reads FHRPLKEYSF…AEVREKMEEE (462 aa). LRR repeat units lie at residues 535 to 556, 558 to 578, 582 to 603, 605 to 626, 630 to 651, 653 to 674, 676 to 697, 699 to 720, 722 to 744, and 745 to 766; these read QLKVLSLRSNAGKVPASVTDVA, HLQRLSLHNDGARLLALNSLK, VLRELELVACGLERIPHAIFSL, ALQELDLKDNHLRSIEEILSFQ, KLVTLRLWHNQIAYVPEHVRKL, SLEQLYLSHNKLETLPTQLGQC, GLRLLDLSHNGLRSLPPELGLL, SLQHLALSYNALESLPDELFFC, KLRTLLLGYNHLTQLSPDVAALQ, and ALSRLELKGNRLETLPEELGDC.

The protein belongs to the LRRC8 family. In terms of assembly, heterohexamer; oligomerizes with other LRRC8 proteins (LRRC8A, LRRC8C, LRRC8D and/or LRRC8B) to form a heterohexamer. In vivo, the subunit composition may depend primarily on expression levels, and heterooligomeric channels containing various proportions of the different LRRC8 proteins may coexist.

Its subcellular location is the cell membrane. It localises to the endoplasmic reticulum membrane. It is found in the lysosome membrane. It carries out the reaction chloride(in) = chloride(out). The catalysed reaction is iodide(out) = iodide(in). It catalyses the reaction taurine(out) = taurine(in). The enzyme catalyses 2',3'-cGAMP(out) = 2',3'-cGAMP(in). In terms of biological role, non-essential component of the volume-regulated anion channel (VRAC, also named VSOAC channel), an anion channel required to maintain a constant cell volume in response to extracellular or intracellular osmotic changes. The VRAC channel conducts iodide better than chloride and can also conduct organic osmolytes like taurine. Mediates efflux of amino acids, such as aspartate, in response to osmotic stress. The VRAC channel also mediates transport of immunoreactive cyclic dinucleotide GMP-AMP (2'-3'-cGAMP), an immune messenger produced in response to DNA virus in the cytosol. Channel activity requires LRRC8A plus at least one other family member (LRRC8B, LRRC8C, LRRC8D or LRRC8E); channel characteristics depend on the precise subunit composition. Also plays a role in lysosome homeostasis by forming functional lysosomal VRAC channels in response to low cytoplasmic ionic strength condition: lysosomal VRAC channels are necessary for the formation of large lysosome-derived vacuoles, which store and then expel excess water to maintain cytosolic water homeostasis. The chain is Volume-regulated anion channel subunit LRRC8E from Mus musculus (Mouse).